The sequence spans 102 residues: Iron-sulfur cluster assembly protein CyaY (102 aa).

This sequence belongs to the frataxin family.

Its function is as follows. Involved in iron-sulfur (Fe-S) cluster assembly. May act as a regulator of Fe-S biogenesis. The sequence is that of Iron-sulfur cluster assembly protein CyaY from Histophilus somni (strain 2336) (Haemophilus somnus).